We begin with the raw amino-acid sequence, 1119 residues long: Synaptojanin (1119 aa).

The SAC domain maps to 119–438 (LQRLLSSQMF…GDQCSTIYAG (320 aa)). The segment at 532–826 (GTWNVNGGKN…DRSELKTSDH (295 aa)) is catalytic. Disordered regions lie at residues 986-1005 (SLTLTGSAPDRPRPPSARSE) and 1042-1119 (EHVP…PKNM). Over residues 1050–1072 (PQSNNNKSPPQACLFNPFTQSAP) the composition is skewed to low complexity. Pro residues-rich tracts occupy residues 1073–1085 (SPAPPPSTIPLPP) and 1093–1119 (PGPPAVPVRKAPPPPPRPVIPPRPKNM).

This sequence belongs to the synaptojanin family. It in the central section; belongs to the inositol 1,4,5-trisphosphate 5-phosphatase family.

It is found in the cytoplasmic vesicle. Its subcellular location is the secretory vesicle. It localises to the synaptic vesicle. The protein resides in the synapse. The catalysed reaction is a 1,2-diacyl-sn-glycero-3-phospho-(1D-myo-inositol-4,5-bisphosphate) + H2O = a 1,2-diacyl-sn-glycero-3-phospho-(1D-myo-inositol 4-phosphate) + phosphate. Probable inositol 5-phosphatase which regulates synaptic vesicle recycling in neurons by regulating clathrin-mediated endocytosis. The polypeptide is Synaptojanin (Caenorhabditis elegans).